We begin with the raw amino-acid sequence, 180 residues long: Large ribosomal subunit protein uL5 (180 aa).

It belongs to the universal ribosomal protein uL5 family. As to quaternary structure, part of the 50S ribosomal subunit; part of the 5S rRNA/L5/L18/L25 subcomplex. Contacts the 5S rRNA and the P site tRNA. Forms a bridge to the 30S subunit in the 70S ribosome.

Functionally, this is one of the proteins that bind and probably mediate the attachment of the 5S RNA into the large ribosomal subunit, where it forms part of the central protuberance. In the 70S ribosome it contacts protein S13 of the 30S subunit (bridge B1b), connecting the 2 subunits; this bridge is implicated in subunit movement. Contacts the P site tRNA; the 5S rRNA and some of its associated proteins might help stabilize positioning of ribosome-bound tRNAs. The polypeptide is Large ribosomal subunit protein uL5 (Roseiflexus castenholzii (strain DSM 13941 / HLO8)).